Reading from the N-terminus, the 143-residue chain is Ayaconin (143 aa).

The first 22 residues, 1–22 (MSFLFFLVVLISIGLWVGPCVA), serve as a signal peptide directing secretion.

In terms of assembly, interacts with human F12 (inactive). As to expression, salivary gland.

Its subcellular location is the secreted. Its function is as follows. Inhibits the intrinsic blood coagulation pathway in the host by blocking activation of host coagulation factor XII (F12). The sequence is that of Ayaconin from Lutzomyia ayacuchensis (Sand fly).